Here is a 365-residue protein sequence, read N- to C-terminus: tRNA(Met) cytidine acetate ligase (365 aa).

Residues isoleucine 7–leucine 20, glycine 96, asparagine 152, and arginine 175 contribute to the ATP site.

The protein belongs to the TmcAL family.

It is found in the cytoplasm. The enzyme catalyses cytidine(34) in elongator tRNA(Met) + acetate + ATP = N(4)-acetylcytidine(34) in elongator tRNA(Met) + AMP + diphosphate. Catalyzes the formation of N(4)-acetylcytidine (ac(4)C) at the wobble position of elongator tRNA(Met), using acetate and ATP as substrates. First activates an acetate ion to form acetyladenylate (Ac-AMP) and then transfers the acetyl group to tRNA to form ac(4)C34. This chain is tRNA(Met) cytidine acetate ligase, found in Streptococcus pneumoniae (strain Hungary19A-6).